The sequence spans 862 residues: Probable alpha,alpha-trehalose-phosphate synthase [UDP-forming] 11 (862 aa).

The residue at position 5 (Ser-5) is a Phosphoserine. Positions Pro-50–Arg-538 are glycosyltransferase. The segment at Ser-838–Ala-862 is disordered.

It in the N-terminal section; belongs to the glycosyltransferase 20 family. In the C-terminal section; belongs to the trehalose phosphatase family. In terms of tissue distribution, expressed in leaves, roots, stems and flowers.

The catalysed reaction is D-glucose 6-phosphate + UDP-alpha-D-glucose = alpha,alpha-trehalose 6-phosphate + UDP + H(+). This Arabidopsis thaliana (Mouse-ear cress) protein is Probable alpha,alpha-trehalose-phosphate synthase [UDP-forming] 11 (TPS11).